A 280-amino-acid polypeptide reads, in one-letter code: uncharacterized protein (280 aa).

This sequence belongs to the herpesviridae BDLF2 family.

This is an uncharacterized protein from Saimiri sciureus (Common squirrel monkey).